A 206-amino-acid chain; its full sequence is Small ribosomal subunit protein uS4 (206 aa).

The region spanning 96-156 is the S4 RNA-binding domain; sequence GRLDNVVYRM…EKAKKQARIK (61 aa).

The protein belongs to the universal ribosomal protein uS4 family. Part of the 30S ribosomal subunit. Contacts protein S5. The interaction surface between S4 and S5 is involved in control of translational fidelity.

In terms of biological role, one of the primary rRNA binding proteins, it binds directly to 16S rRNA where it nucleates assembly of the body of the 30S subunit. Functionally, with S5 and S12 plays an important role in translational accuracy. The protein is Small ribosomal subunit protein uS4 of Tolumonas auensis (strain DSM 9187 / NBRC 110442 / TA 4).